Reading from the N-terminus, the 85-residue chain is Large ribosomal subunit protein uL23 (85 aa).

It belongs to the universal ribosomal protein uL23 family. In terms of assembly, part of the 50S ribosomal subunit. Interacts with protein L29 and weakly with protein L39e.

In terms of biological role, binds to a specific region on the 23S rRNA. Located at the polypeptide exit tunnel on the outside of the subunit. The polypeptide is Large ribosomal subunit protein uL23 (Haloarcula marismortui (strain ATCC 43049 / DSM 3752 / JCM 8966 / VKM B-1809) (Halobacterium marismortui)).